Here is a 309-residue protein sequence, read N- to C-terminus: High-affinity zinc uptake system protein AztC (309 aa).

The N-terminal stretch at 1 to 24 (MKDWLFRIATCSIMTFSSLAAAQA) is a signal peptide. H61 is a binding site for Zn(2+). The interval 117-132 (GGGHYHYIDGKAVFHA) is D-loop. H138 contributes to the Zn(2+) binding site. An intrachain disulfide couples C158 to C165. Residue H204 coordinates Zn(2+). The segment at 222–229 (QGVSTESE) is Z-loop. D279 contributes to the Zn(2+) binding site.

This sequence belongs to the bacterial solute-binding protein 9 family. As to quaternary structure, monomer.

It localises to the periplasm. Part of the ATP-binding cassette (ABC) transport system AztABCD involved in zinc import. Binds zinc with high affinity and specificity and delivers it to the membrane permease for translocation into the cytoplasm. The sequence is that of High-affinity zinc uptake system protein AztC from Paracoccus denitrificans (strain Pd 1222).